Reading from the N-terminus, the 346-residue chain is Flap endonuclease 1 (346 aa).

The tract at residues 1 to 100 (MGVDIKELVE…KELERRYQIK (100 aa)) is N-domain. Mg(2+) contacts are provided by Asp-29, Asp-82, Glu-154, Glu-156, Asp-175, Asp-177, and Asp-238. Positions 118-260 (EARIYAQQTS…KALKLVKELK (143 aa)) are I-domain. Positions 336 to 344 (KQQSLESWF) are interaction with PCNA.

The protein belongs to the XPG/RAD2 endonuclease family. FEN1 subfamily. Interacts with PCNA. PCNA stimulates the nuclease activity without altering cleavage specificity. Mg(2+) serves as cofactor.

Functionally, structure-specific nuclease with 5'-flap endonuclease and 5'-3' exonuclease activities involved in DNA replication and repair. During DNA replication, cleaves the 5'-overhanging flap structure that is generated by displacement synthesis when DNA polymerase encounters the 5'-end of a downstream Okazaki fragment. Binds the unpaired 3'-DNA end and kinks the DNA to facilitate 5' cleavage specificity. Cleaves one nucleotide into the double-stranded DNA from the junction in flap DNA, leaving a nick for ligation. Also involved in the base excision repair (BER) pathway. Acts as a genome stabilization factor that prevents flaps from equilibrating into structures that lead to duplications and deletions. Also possesses 5'-3' exonuclease activity on nicked or gapped double-stranded DNA. The polypeptide is Flap endonuclease 1 (Thermofilum pendens (strain DSM 2475 / Hrk 5)).